Reading from the N-terminus, the 299-residue chain is Oxygen-dependent coproporphyrinogen-III oxidase (299 aa).

Serine 92 provides a ligand contact to substrate. A divalent metal cation-binding residues include histidine 96 and histidine 106. Catalysis depends on histidine 106, which acts as the Proton donor. A substrate-binding site is contributed by 108–110 (NVR). Histidine 145 and histidine 175 together coordinate a divalent metal cation. The tract at residues 240–275 (YVEFNLVWDRGTLFGLQTGGRTESILMSMPPLVRWE) is important for dimerization. 258–260 (GGR) contributes to the substrate binding site.

It belongs to the aerobic coproporphyrinogen-III oxidase family. Homodimer. The cofactor is a divalent metal cation.

The protein resides in the cytoplasm. The enzyme catalyses coproporphyrinogen III + O2 + 2 H(+) = protoporphyrinogen IX + 2 CO2 + 2 H2O. It participates in porphyrin-containing compound metabolism; protoporphyrin-IX biosynthesis; protoporphyrinogen-IX from coproporphyrinogen-III (O2 route): step 1/1. In terms of biological role, involved in the heme biosynthesis. Catalyzes the aerobic oxidative decarboxylation of propionate groups of rings A and B of coproporphyrinogen-III to yield the vinyl groups in protoporphyrinogen-IX. This Salmonella schwarzengrund (strain CVM19633) protein is Oxygen-dependent coproporphyrinogen-III oxidase.